The following is a 162-amino-acid chain: 2-C-methyl-D-erythritol 2,4-cyclodiphosphate synthase (162 aa).

Positions 12 and 14 each coordinate a divalent metal cation. Residues 12–14 (DVH) and 38–39 (HS) contribute to the 4-CDP-2-C-methyl-D-erythritol 2-phosphate site. Position 46 (His46) interacts with a divalent metal cation. 4-CDP-2-C-methyl-D-erythritol 2-phosphate contacts are provided by residues 60 to 62 (DIG), 65 to 69 (FPDTD), and Arg146.

Belongs to the IspF family. Homotrimer. A divalent metal cation serves as cofactor.

The catalysed reaction is 4-CDP-2-C-methyl-D-erythritol 2-phosphate = 2-C-methyl-D-erythritol 2,4-cyclic diphosphate + CMP. It participates in isoprenoid biosynthesis; isopentenyl diphosphate biosynthesis via DXP pathway; isopentenyl diphosphate from 1-deoxy-D-xylulose 5-phosphate: step 4/6. Its function is as follows. Involved in the biosynthesis of isopentenyl diphosphate (IPP) and dimethylallyl diphosphate (DMAPP), two major building blocks of isoprenoid compounds. Catalyzes the conversion of 4-diphosphocytidyl-2-C-methyl-D-erythritol 2-phosphate (CDP-ME2P) to 2-C-methyl-D-erythritol 2,4-cyclodiphosphate (ME-CPP) with a corresponding release of cytidine 5-monophosphate (CMP). This chain is 2-C-methyl-D-erythritol 2,4-cyclodiphosphate synthase, found in Bordetella parapertussis (strain 12822 / ATCC BAA-587 / NCTC 13253).